The following is a 512-amino-acid chain: tRNA-2-methylthio-N(6)-dimethylallyladenosine synthase (512 aa).

The disordered stretch occupies residues 1–20 (MLQQADGVSPDRSSCDTPAP). Residues 21–137 (RTFEVRTYGC…LPTLLDRARH (117 aa)) enclose the MTTase N-terminal domain. Residues Cys-30, Cys-66, Cys-100, Cys-174, Cys-178, and Cys-181 each coordinate [4Fe-4S] cluster. In terms of domain architecture, Radical SAM core spans 160 to 397 (RESAYAAWVS…ELQERISWEE (238 aa)). One can recognise a TRAM domain in the interval 399 to 469 (RAQIGREVEL…PHHLIADAGP (71 aa)). Over residues 470–486 (AEHRRTRAGDAHAEGRT) the composition is skewed to basic and acidic residues. The disordered stretch occupies residues 470 to 512 (AEHRRTRAGDAHAEGRTPKTGVGLGMPGIGAPEPAPVTQGCAL).

This sequence belongs to the methylthiotransferase family. MiaB subfamily. Monomer. [4Fe-4S] cluster is required as a cofactor.

The protein resides in the cytoplasm. It carries out the reaction N(6)-dimethylallyladenosine(37) in tRNA + (sulfur carrier)-SH + AH2 + 2 S-adenosyl-L-methionine = 2-methylsulfanyl-N(6)-dimethylallyladenosine(37) in tRNA + (sulfur carrier)-H + 5'-deoxyadenosine + L-methionine + A + S-adenosyl-L-homocysteine + 2 H(+). Functionally, catalyzes the methylthiolation of N6-(dimethylallyl)adenosine (i(6)A), leading to the formation of 2-methylthio-N6-(dimethylallyl)adenosine (ms(2)i(6)A) at position 37 in tRNAs that read codons beginning with uridine. The sequence is that of tRNA-2-methylthio-N(6)-dimethylallyladenosine synthase from Mycolicibacterium gilvum (strain PYR-GCK) (Mycobacterium gilvum (strain PYR-GCK)).